A 683-amino-acid polypeptide reads, in one-letter code: Elongation factor G-like protein (683 aa).

In terms of domain architecture, tr-type G spans 5-267; sequence QNVRSAALIG…YLGDIGVSPE (263 aa). Residues 14 to 21, 73 to 77, and 127 to 130 each bind GTP; these read GHNGSGKS, DTPGF, and NQMD.

The protein belongs to the TRAFAC class translation factor GTPase superfamily. Classic translation factor GTPase family. EF-G/EF-2 subfamily.

This is Elongation factor G-like protein from Thermotoga maritima (strain ATCC 43589 / DSM 3109 / JCM 10099 / NBRC 100826 / MSB8).